Here is a 304-residue protein sequence, read N- to C-terminus: N-acetyl-D-glucosamine kinase (304 aa).

Residues 4–11 (GFDMGGTK) and 133–140 (GVGGGLIV) each bind ATP. Residues histidine 157, cysteine 177, cysteine 179, and cysteine 184 each contribute to the Zn(2+) site.

It belongs to the ROK (NagC/XylR) family. NagK subfamily.

It carries out the reaction N-acetyl-D-glucosamine + ATP = N-acetyl-D-glucosamine 6-phosphate + ADP + H(+). Its pathway is cell wall biogenesis; peptidoglycan recycling. Its function is as follows. Catalyzes the phosphorylation of N-acetyl-D-glucosamine (GlcNAc) derived from cell-wall degradation, yielding GlcNAc-6-P. The chain is N-acetyl-D-glucosamine kinase from Yersinia pseudotuberculosis serotype O:3 (strain YPIII).